A 390-amino-acid chain; its full sequence is Flagellar P-ring protein (390 aa).

Residues 1-36 (MFFSRKIRSLLLTPKRRWSLILTLCLIFTGINFSTS) form the signal peptide.

It belongs to the FlgI family. In terms of assembly, the basal body constitutes a major portion of the flagellar organelle and consists of four rings (L,P,S, and M) mounted on a central rod.

It is found in the periplasm. It localises to the bacterial flagellum basal body. Its function is as follows. Assembles around the rod to form the L-ring and probably protects the motor/basal body from shearing forces during rotation. The chain is Flagellar P-ring protein from Desulfotalea psychrophila (strain LSv54 / DSM 12343).